The sequence spans 511 residues: Cytochrome P450 4B1 (511 aa).

Heme is bound by residues Glu315 and Cys453.

It belongs to the cytochrome P450 family. Requires heme as cofactor.

The protein localises to the endoplasmic reticulum membrane. The protein resides in the microsome membrane. The catalysed reaction is an organic molecule + reduced [NADPH--hemoprotein reductase] + O2 = an alcohol + oxidized [NADPH--hemoprotein reductase] + H2O + H(+). Cytochromes P450 are a group of heme-thiolate monooxygenases. In liver microsomes, this enzyme is involved in an NADPH-dependent electron transport pathway. It oxidizes a variety of structurally unrelated compounds, including steroids, fatty acids, and xenobiotics. In Rattus norvegicus (Rat), this protein is Cytochrome P450 4B1 (Cyp4b1).